The following is a 295-amino-acid chain: Lectin 11 (295 aa).

The Cytoplasmic portion of the chain corresponds to 1-22 (MHYSHFYFIINNTNMTINAIPK). The helical transmembrane segment at 23–45 (LFATKNSISLSIVIFMYLLILVA) threads the bilayer. Residues 46 to 295 (NVKSDSSFNF…ILSWSFTSNM (250 aa)) are Extracellular-facing. A glycan (N-linked (GlcNAc...) asparagine) is linked at Asn-152.

It belongs to the leguminous lectin family.

The protein resides in the membrane. May be involved in arbuscular mycorrhizal (AM) symbiosis with AM fungi. In Medicago truncatula (Barrel medic), this protein is Lectin 11.